The following is a 201-amino-acid chain: Translation initiation factor IF-3 (201 aa).

The interval 167–201 (PHRGAKTRARARHPGEPAGGPPPKPTAGDSKAAPN) is disordered. Positions 169–178 (RGAKTRARAR) are enriched in basic residues.

Belongs to the IF-3 family. In terms of assembly, monomer.

Its subcellular location is the cytoplasm. In terms of biological role, IF-3 binds to the 30S ribosomal subunit and shifts the equilibrium between 70S ribosomes and their 50S and 30S subunits in favor of the free subunits, thus enhancing the availability of 30S subunits on which protein synthesis initiation begins. In Mycobacterium bovis (strain ATCC BAA-935 / AF2122/97), this protein is Translation initiation factor IF-3.